The chain runs to 2346 residues: MGDAPIQPQTPAIAVVGMACRLPGSNNSIHAFWNFLKQARQASNTVPESRFNVGAHADGSGKPKTMTSVPGMFLEDIDIGAFDAGFFNISPAEAMAMDPQQRQLLEVAYECLENSGISVDAIFGREMGCFVGSFVGDYADMMARDPEERPTTAATGIGRAILSNRISHFFNLKGPSMTIDTGCSGSLVAVDLACRYLEAGDIESAFVAGSGILHGWADGYAKSEGVNCVMLKNLDSAIRDGDPIRAVIRGWATNSDGYTPGITHPSVDAQVACIKRAYAKAGIEDYSQTGYLECHGTGTPIGDAVETTAIANVFAQSRDDSRPLIIGSVKSNIGHSEAASGLSGLIKSVMAIENGVIPGTPSFITPNPNINFQALRLHVSQTSIPWPLNTIRRASINSFGYGGTNCHLIVEDARLHLGVEQNETYNSSLCSSTSLSLDEDDPRDVVYPRPYIIVLSAVDDDSLTINCKKLLRHLADLHVHLKLPDLSYTLATRRSHHSKRAFAVSNSLNLHARDFMRGQKQFENPRIGFIFTGQGSQWPQMGKDLVRTFPRALEIISEMDAVLQGLPDAPTWSLLDMLVEPHDASRIRQPEISQPLVTAIQLTLVALLEDWNIFPDNVIGHSSGEIAAAYAAGYISKEDAIINAFYRGHAAKVASDSNLSVGMMAVGLGKDEIRPHLEDLADSVYVACVNSPRSITLSGVKTSLEMLRDRLSSVGIFVRILQVDLAYHSPFMKTIGDRYEHSLGQNLPVVGEQPSNTRHTSMFSTVTGEVIKNNPDSQYWRKNMCSPVQFWQGLAAMLSDSEPDLLVEIGPSNTLAGPVRQTNDNLANSSKVEYFSALKRGEDPIGALFDLCGQLYLRGCPIKLERVNRGYEQTNTPPAIVDLPNYGWNHSFSYWNENESSKDWRFRRYLPHDLLGSKILGTTWHTPSWKNTLRLRSLPWLEDHKIGSDVIFPAAGYISMAIEALYQATCAVNEQHAGFSISQLHFSLRNVEFKRAMILDHTSDTRLVLTLESQKGINSWRLFRISSFDGKQWTEHCTGLIRTSEEDSLVQKDLVMPKMIHATPAQVWYRKFADIGYGYGPSFEKMLLVEARVGAAQNRCVISMQAPAAAQSPSFYPIHPTCLDACLQSVFPSLWQGDHTAISTLLLPARIDSLVIHPQPNSINSNVASAKSTYSGRGRLQDRTSWSSDCSLNREEDGKCVLRINGLRFSSVDLGSVQPAAQFWYRSVWCPDITKWSFMPQKHWIPRPNTVNELINWVVHKHGEVSIIELNWDSDDASSLWLDRADHPMRDLTKKYRLLLSDHESLVKSQNLFPNHASSMQMILDRDDPLSGPEWPKMQLVILKSSDCSVHDSSMGRLLGQISEIMSTDGMLVIVAQSLGSDSHSNDARSDSSVFMEHEDRSKSYVPFSHLLSLDLPSSAKHVQLYSRASPAPSCPPQPVALYSFQKTSPISKGLRESLTQNNISLSEVSIHGPETVEIGIGLVVDEIYAPLLCNISSQQWESLKTLFERETPVLWVTQGAQHQVTNPDSSLIYGYLRSLRAEGNASSRFVILDVENGDSPGSRTAITTLLSEMSSSPDRFDHEWEFCERSGIIHVNRIYQDRKLNNLDDIEPAQTSIASCDEKVALHATHLGSLEALQWTQEDTEDSILAPGDVEVKIDVAGLNFKDVALAMGIVHGDEYRLGHEGSGRIQRVGSQTAGYQVGDRVAVFSIGSFANRIQVSTELIHHIPDNMSFEDAATLPLVYSTALYSLLDVANLQANQSVLIHSATGGLGIACIQIAQYIGAKVYATAGTQEKRELLCKEYSIPESQVFSSRDTRFVAGIRGATQGGGVDVIVNTLTGDLLHESWMLCADGGIFVELGKKDIIERNSLSMEPFDRNCSFRAVDLSHKQITDTMKKGLLTRIFDMIKCGNIGPIRPQTTFALNDIQSAFAHMRSARHIGKILILAKDDADTSVPVHSSRRPISIPGDRTYLIVGGLRGLCGSLAICLAQRGAKHITIISRSGCNDERSKAIIADCENLGCRIVDAVGDVTSLQHVKNVFQKADPPIRGVIHGAMVLRDKPIETMSAVDFHQTISSKVKGAWNIHHAAAEQDKSQSLEFFTMLSSISGVVGQKGQANYAAANVFLDSFAAYRCSLGLPAHSLDLGVVDAIGVAAEKGGMERYFNLEHWPRIKESKLHEILCISIDEQKKARYSQLITGLPSGISQLPILSQDARFSILCAEDSQTEGHQPVSPSKDTSSKELYEFRLLVKAMKAKSQLVEKAVTLCGLQLSRLLYLKNQVIDANKSLAAYGLDSLIAIEFRNWLKKELAVEMSTFEVIGASCLHALAEKMVSKVEAGVPVVEVV.

The region spanning threonine 10–aspartate 412 is the Ketosynthase family 3 (KS3) domain. Residues cysteine 183, histidine 295, and histidine 335 each act as for beta-ketoacyl synthase activity in the active site. A malonyl-CoA:ACP transacylase (MAT) domain region spans residues isoleucine 530 to glutamate 842. Serine 622 serves as the catalytic For malonyltransferase activity. The tract at residues histidine 912–serine 1048 is N-terminal hotdog fold. Residues histidine 912 to aspartate 1213 are dehydratase (DH) domain. The 307-residue stretch at histidine 912–glutamine 1218 folds into the PKS/mFAS DH domain. Catalysis depends on histidine 944, which acts as the Proton acceptor; for dehydratase activity. The C-terminal hotdog fold stretch occupies residues isoleucine 1060–glutamine 1218. Residue aspartate 1124 is the Proton donor; for dehydratase activity of the active site. Residues glycine 1633–isoleucine 1946 are enoyl reductase (ER) domain. A ketoreductase (KR) domain region spans residues threonine 1972–alanine 2151. One can recognise a Carrier domain in the interval serine 2258 to valine 2336. Serine 2296 carries the post-translational modification O-(pantetheine 4'-phosphoryl)serine.

Pantetheine 4'-phosphate is required as a cofactor.

Its pathway is secondary metabolite biosynthesis. In terms of biological role, highly reducing polyketide synthase; part of the cla gene cluster that produces clavatol and ortho-quinone methide. The clavatol biosynthesis cluster cla and the terrestric acid cluster tra are both involved in the production of peniphenones and penilactones. The non-reducing PKS claF is responsible for the formation of clavatol from successive condensations of 3 malonyl-CoA units, presumably with a simple acetyl-CoA starter unit, and 2 methylation steps. The esterase claE probably collaborates with claF by catalyzing the hydrolysis of ACP-bound acyl intermediates to free the ACP from stalled intermediates. The clavatol oxidase claD then converts clavatol to hydroxyclavatol. Spontaneous dehydration of hydroxyclavatol leads to the accumulation of the highly active ortho-quinone methide. On the other hand, the PKS-NRPS hybrid traA is involved in the formation of crustosic acid, with the help of traB and traD. The polyketide synthase module (PKS) of traA is responsible for the synthesis of the polyketide backbone via the condensation of an acetyl-CoA starter unit with 3 malonyl-CoA units. The downstream nonribosomal peptide synthetase (NRPS) module then amidates the carboxyl end of the polyketide with L-malic acid. Because traA lacks a designated enoylreductase (ER) domain, the required activity is provided the enoyl reductase traG. Crustosic acid undergoes decarboxylation and isomerization to the terrestric acid, catalyzed by the 2-oxoglutarate-dependent dioxygenase traH. Both acids are further converted to the 2 gamma-butyrolactones (R)-5-methyltetronic acid and (S)-5-carboxylmethyltetronic acid, with involvement of the cytochrome P450 monooxygenase claJ. Spontaneous addition of the methide to these gamma-butyrolactones leads to peniphenone D and penilactone D, which undergo again stereospecific attacking by methide to give penilactones A and B. The function of the highly reducing polyketide synthase claI has not been investigated yet. This Penicillium crustosum (Blue mold fungus) protein is Highly reducing polyketide synthase claI.